The sequence spans 109 residues: Nucleoid-associated protein Cvib_1034 (109 aa).

Belongs to the YbaB/EbfC family. In terms of assembly, homodimer.

It localises to the cytoplasm. The protein localises to the nucleoid. In terms of biological role, binds to DNA and alters its conformation. May be involved in regulation of gene expression, nucleoid organization and DNA protection. The sequence is that of Nucleoid-associated protein Cvib_1034 from Chlorobium phaeovibrioides (strain DSM 265 / 1930) (Prosthecochloris vibrioformis (strain DSM 265)).